Consider the following 354-residue polypeptide: Uroporphyrinogen decarboxylase (354 aa).

Residues 27–31 (RQAGR), D77, Y154, S209, and H327 contribute to the substrate site.

The protein belongs to the uroporphyrinogen decarboxylase family. In terms of assembly, homodimer.

The protein localises to the cytoplasm. It catalyses the reaction uroporphyrinogen III + 4 H(+) = coproporphyrinogen III + 4 CO2. The protein operates within porphyrin-containing compound metabolism; protoporphyrin-IX biosynthesis; coproporphyrinogen-III from 5-aminolevulinate: step 4/4. Functionally, catalyzes the decarboxylation of four acetate groups of uroporphyrinogen-III to yield coproporphyrinogen-III. The protein is Uroporphyrinogen decarboxylase of Pseudomonas savastanoi pv. phaseolicola (strain 1448A / Race 6) (Pseudomonas syringae pv. phaseolicola (strain 1448A / Race 6)).